Here is a 295-residue protein sequence, read N- to C-terminus: Phosphatidylserine decarboxylase proenzyme (295 aa).

Residues aspartate 90 and serine 258 each act as charge relay system; for autoendoproteolytic cleavage activity in the active site. The active-site Schiff-base intermediate with substrate; via pyruvic acid; for decarboxylase activity is the serine 258. Serine 258 bears the Pyruvic acid (Ser); by autocatalysis mark.

The protein belongs to the phosphatidylserine decarboxylase family. PSD-B subfamily. Prokaryotic type I sub-subfamily. As to quaternary structure, heterodimer of a large membrane-associated beta subunit and a small pyruvoyl-containing alpha subunit. Pyruvate serves as cofactor. Post-translationally, is synthesized initially as an inactive proenzyme. Formation of the active enzyme involves a self-maturation process in which the active site pyruvoyl group is generated from an internal serine residue via an autocatalytic post-translational modification. Two non-identical subunits are generated from the proenzyme in this reaction, and the pyruvate is formed at the N-terminus of the alpha chain, which is derived from the carboxyl end of the proenzyme. The autoendoproteolytic cleavage occurs by a canonical serine protease mechanism, in which the side chain hydroxyl group of the serine supplies its oxygen atom to form the C-terminus of the beta chain, while the remainder of the serine residue undergoes an oxidative deamination to produce ammonia and the pyruvoyl prosthetic group on the alpha chain. During this reaction, the Ser that is part of the protease active site of the proenzyme becomes the pyruvoyl prosthetic group, which constitutes an essential element of the active site of the mature decarboxylase.

It localises to the cell membrane. It carries out the reaction a 1,2-diacyl-sn-glycero-3-phospho-L-serine + H(+) = a 1,2-diacyl-sn-glycero-3-phosphoethanolamine + CO2. The protein operates within phospholipid metabolism; phosphatidylethanolamine biosynthesis; phosphatidylethanolamine from CDP-diacylglycerol: step 2/2. Its function is as follows. Catalyzes the formation of phosphatidylethanolamine (PtdEtn) from phosphatidylserine (PtdSer). The polypeptide is Phosphatidylserine decarboxylase proenzyme (Blochmanniella pennsylvanica (strain BPEN)).